Consider the following 222-residue polypeptide: Protein SHI RELATED SEQUENCE 4 (222 aa).

Cysteine 72, cysteine 75, cysteine 83, cysteine 88, cysteine 92, and cysteine 99 together coordinate Zn(2+). Positions 72–99 (CQECGNQAKKGCTHGRCRTCCKSNGLHC) form a DNA-binding region, zn(2)-C6 fungal-type; degenerate. The segment at 114 to 137 (RERQQQLQTPTSNPTGGSGRVGKY) is disordered. The span at 118-128 (QQLQTPTSNPT) shows a compositional bias: polar residues. A Required for homo- and heterodimerization motif is present at residues 191–194 (IAGH).

It belongs to the SHI protein family. In terms of tissue distribution, expressed in cotyledon tips, leaf primordia, hydathodes, stipules, and lateral root primordia and weakly at the edges of petals and sepals.

The protein localises to the nucleus. Functionally, transcription activator that binds DNA on 5'-ACTCTAC-3' and promotes auxin homeostasis-regulating gene expression (e.g. YUC genes), as well as genes affecting stamen development, cell expansion and timing of flowering. Synergistically with other SHI-related proteins, regulates gynoecium, stamen and leaf development in a dose-dependent manner, controlling apical-basal patterning. Promotes style and stigma formation, and influences vascular development during gynoecium development. May also have a role in the formation and/or maintenance of the shoot apical meristem (SAM). The sequence is that of Protein SHI RELATED SEQUENCE 4 (SRS4) from Arabidopsis thaliana (Mouse-ear cress).